Here is a 735-residue protein sequence, read N- to C-terminus: Translation factor GUF1 homolog, chloroplastic (735 aa).

Disordered regions lie at residues 1 to 38 and 106 to 126; these read MAVP…PSTS and PENA…GVDN. The N-terminal 47 residues, 1–47, are a transit peptide targeting the chloroplast; sequence MAVPTIPSPACISQSANGSIISTRRSTETNPRQHPSTSYRCAGRVVR. Over residues 11 to 38 the composition is skewed to polar residues; the sequence is CISQSANGSIISTRRSTETNPRQHPSTS. Over residues 106-115 the composition is skewed to basic and acidic residues; that stretch reads PENAEKDYSK. A tr-type G domain is found at 137-319; the sequence is SNIRNFSIIA…AVVKKIPPPK (183 aa). GTP-binding positions include 146-153, 212-216, and 266-269; these read AHIDHGKS, DTPGH, and NKID.

It belongs to the TRAFAC class translation factor GTPase superfamily. Classic translation factor GTPase family. LepA subfamily.

It localises to the plastid. The protein localises to the chloroplast. It catalyses the reaction GTP + H2O = GDP + phosphate + H(+). In terms of biological role, promotes chloroplast protein synthesis. May act as a fidelity factor of the translation reaction, by catalyzing a one-codon backward translocation of tRNAs on improperly translocated ribosomes. The chain is Translation factor GUF1 homolog, chloroplastic from Physcomitrium patens (Spreading-leaved earth moss).